The primary structure comprises 1203 residues: ATP-dependent helicase/nuclease subunit A (1203 aa).

Residues 4–472 (VKLTPEQNEA…IRLKENFRSR (469 aa)) form the UvrD-like helicase ATP-binding domain. 25-32 (ASAGSGKT) is a binding site for ATP. One can recognise a UvrD-like helicase C-terminal domain in the interval 503-785 (VQGNITDYPV…RVMTFHKSKG (283 aa)).

The protein belongs to the helicase family. AddA subfamily. As to quaternary structure, heterodimer of AddA and AddB/RexB. The cofactor is Mg(2+).

The enzyme catalyses Couples ATP hydrolysis with the unwinding of duplex DNA by translocating in the 3'-5' direction.. It carries out the reaction ATP + H2O = ADP + phosphate + H(+). Functionally, the heterodimer acts as both an ATP-dependent DNA helicase and an ATP-dependent, dual-direction single-stranded exonuclease. Recognizes the chi site generating a DNA molecule suitable for the initiation of homologous recombination. The AddA nuclease domain is required for chi fragment generation; this subunit has the helicase and 3' -&gt; 5' nuclease activities. This is ATP-dependent helicase/nuclease subunit A from Lactococcus lactis subsp. lactis (strain IL1403) (Streptococcus lactis).